Reading from the N-terminus, the 300-residue chain is GTPase Era (300 aa).

The Era-type G domain occupies 5-176; the sequence is RSGFVCLIGR…IDVLAAALPP (172 aa). Residues 13 to 20 are G1; that stretch reads GRPNTGKS. 13–20 lines the GTP pocket; that stretch reads GRPNTGKS. The G2 stretch occupies residues 39 to 43; that stretch reads QTTRH. Residues 61-64 form a G3 region; the sequence is DTPG. GTP is bound by residues 61–65 and 125–128; these read DTPGL and TKID. The segment at 125 to 128 is G4; sequence TKID. The segment at 155 to 157 is G5; sequence VSA. Residues 207-286 enclose the KH type-2 domain; the sequence is VHDELPHSLA…YLDLHVNVAK (80 aa).

This sequence belongs to the TRAFAC class TrmE-Era-EngA-EngB-Septin-like GTPase superfamily. Era GTPase family. In terms of assembly, monomer.

The protein localises to the cell envelope. It is found in the secreted. It localises to the cell wall. Functionally, exhibits GTPase activity. Binds RNA but is probably not involved in ribosome assembly in mycobacteria. The protein is GTPase Era of Mycobacterium leprae (strain TN).